The following is a 1026-amino-acid chain: Exportin-T (1026 aa).

The protein belongs to the exportin family.

The protein localises to the nucleus. Its subcellular location is the cytoplasm. TRNA nucleus export receptor which facilitates tRNA translocation across the nuclear pore complex. Involved in pre-tRNA splicing, probably by affecting the interaction of pre-tRNA with splicing endonuclease. This is Exportin-T (los1) from Aspergillus oryzae (strain ATCC 42149 / RIB 40) (Yellow koji mold).